Reading from the N-terminus, the 641-residue chain is SUMO-activating enzyme subunit 2 (641 aa).

ATP-binding positions include 24-29, D48, 56-59, K72, 95-96, and 117-122; these read GAGGIG, NLNR, SI, and DNNAAR. Residues C158 and C161 each coordinate Zn(2+). The active-site Glycyl thioester intermediate is the C173. K190 participates in a covalent cross-link: Glycyl lysine isopeptide (Lys-Gly) (interchain with G-Cter in SUMO). K236 participates in a covalent cross-link: Glycyl lysine isopeptide (Lys-Gly) (interchain with G-Cter in SUMO1). Glycyl lysine isopeptide (Lys-Gly) (interchain with G-Cter in SUMO) cross-links involve residues K257 and K275. The Zn(2+) site is built by C439 and C442. The segment at 546–641 is disordered; it reads GDVPEKGPQK…EEDDDIIALD (96 aa). Over residues 556-579 the composition is skewed to polar residues; the sequence is PSEQSVKNITNGSDDGAQPSTSKA. A compositionally biased stretch (acidic residues) spans 582-594; it reads QDDVLIVDSDEES. Residues K610, K612, and K623 each participate in a glycyl lysine isopeptide (Lys-Gly) (interchain with G-Cter in SUMO) cross-link. Over residues 630–641 the composition is skewed to acidic residues; sequence PVEEDDDIIALD.

The protein belongs to the ubiquitin-activating E1 family. As to quaternary structure, heterodimer of sae1 and uba2/sae2. The heterodimer corresponds to the two domains that are encoded on a single polypeptide chain in ubiquitin-activating enzyme E1. Interacts with ube2i. In terms of processing, sumoylated with SUMO1 and SUMO2/3 and by UBC9. Sumoylation at Lys-236 inhibits enzymatic activity. Sumoylation at the C-terminal lysine cluster plays an essential role in nuclear trafficking.

It localises to the cytoplasm. The protein localises to the nucleus. It participates in protein modification; protein sumoylation. The heterodimer acts as an E1 ligase for sumo1, sumo2, and sumo3. It mediates ATP-dependent activation of sumo proteins followed by formation of a thioester bond between a sumo protein and a conserved active site cysteine residue on uba2/sae2. In Xenopus tropicalis (Western clawed frog), this protein is SUMO-activating enzyme subunit 2 (uba2).